The primary structure comprises 379 residues: Tryptophan 2,3-dioxygenase (379 aa).

Residues 57–61 and Arg-128 contribute to the substrate site; that span reads FIITH. Position 312 (His-312) interacts with heme. Thr-327 contacts substrate.

The protein belongs to the tryptophan 2,3-dioxygenase family. As to quaternary structure, homotetramer. Dimer of dimers. It depends on heme as a cofactor.

The enzyme catalyses L-tryptophan + O2 = N-formyl-L-kynurenine. Its pathway is amino-acid degradation; L-tryptophan degradation via kynurenine pathway; L-kynurenine from L-tryptophan: step 1/2. It participates in pigment biosynthesis; ommochrome biosynthesis. Functionally, heme-dependent dioxygenase that catalyzes the oxidative cleavage of the L-tryptophan (L-Trp) pyrrole ring and converts L-tryptophan to N-formyl-L-kynurenine. Catalyzes the oxidative cleavage of the indole moiety. In Drosophila erecta (Fruit fly), this protein is Tryptophan 2,3-dioxygenase.